Here is a 96-residue protein sequence, read N- to C-terminus: Co-chaperonin GroES (96 aa).

This sequence belongs to the GroES chaperonin family. Heptamer of 7 subunits arranged in a ring. Interacts with the chaperonin GroEL.

It localises to the cytoplasm. Its function is as follows. Together with the chaperonin GroEL, plays an essential role in assisting protein folding. The GroEL-GroES system forms a nano-cage that allows encapsulation of the non-native substrate proteins and provides a physical environment optimized to promote and accelerate protein folding. GroES binds to the apical surface of the GroEL ring, thereby capping the opening of the GroEL channel. In Vibrio campbellii (strain ATCC BAA-1116), this protein is Co-chaperonin GroES.